The primary structure comprises 346 residues: Glycerol-3-phosphate dehydrogenase [NAD(P)+] (346 aa).

Residues Ser-15, Trp-16, Arg-36, and Lys-110 each coordinate NADPH. Sn-glycerol 3-phosphate-binding residues include Lys-110, Gly-139, and Ser-141. Position 143 (Ala-143) interacts with NADPH. Sn-glycerol 3-phosphate is bound by residues Lys-194, Asp-247, Ser-257, Arg-258, and Asn-259. Catalysis depends on Lys-194, which acts as the Proton acceptor. Arg-258 contributes to the NADPH binding site. NADPH contacts are provided by Val-282 and Glu-284.

It belongs to the NAD-dependent glycerol-3-phosphate dehydrogenase family.

Its subcellular location is the cytoplasm. The catalysed reaction is sn-glycerol 3-phosphate + NAD(+) = dihydroxyacetone phosphate + NADH + H(+). It carries out the reaction sn-glycerol 3-phosphate + NADP(+) = dihydroxyacetone phosphate + NADPH + H(+). Its pathway is membrane lipid metabolism; glycerophospholipid metabolism. Functionally, catalyzes the reduction of the glycolytic intermediate dihydroxyacetone phosphate (DHAP) to sn-glycerol 3-phosphate (G3P), the key precursor for phospholipid synthesis. The protein is Glycerol-3-phosphate dehydrogenase [NAD(P)+] of Xylella fastidiosa (strain Temecula1 / ATCC 700964).